Here is a 317-residue protein sequence, read N- to C-terminus: tRNA dimethylallyltransferase (317 aa).

14-21 (GPTAVGKT) contributes to the ATP binding site. 16-21 (TAVGKT) is a substrate binding site. The segment at 39–42 (DSMQ) is interaction with substrate tRNA.

The protein belongs to the IPP transferase family. As to quaternary structure, monomer. It depends on Mg(2+) as a cofactor.

The catalysed reaction is adenosine(37) in tRNA + dimethylallyl diphosphate = N(6)-dimethylallyladenosine(37) in tRNA + diphosphate. Functionally, catalyzes the transfer of a dimethylallyl group onto the adenine at position 37 in tRNAs that read codons beginning with uridine, leading to the formation of N6-(dimethylallyl)adenosine (i(6)A). The protein is tRNA dimethylallyltransferase of Bacillus thuringiensis subsp. konkukian (strain 97-27).